Reading from the N-terminus, the 894-residue chain is Translation factor GUF1 homolog, mitochondrial (894 aa).

Positions 157–189 (EDEGLDGGPPPGMEAKKSSSSSSSNNVHSNCSD) are disordered. Residues 174–188 (SSSSSSSNNVHSNCS) show a composition bias toward low complexity. The 178-residue stretch at 199 to 376 (ENIRNFCILA…RIVSEIPSPA (178 aa)) folds into the tr-type G domain. Residues 208-215 (AHIDSGKS), 269-273 (DTPGH), and 323-326 (NKID) each bind GTP. The tract at residues 649–674 (DHDDCNDNGGSNSDDRSDRSGKNPPD) is disordered.

Belongs to the TRAFAC class translation factor GTPase superfamily. Classic translation factor GTPase family. LepA subfamily.

The protein localises to the mitochondrion inner membrane. It catalyses the reaction GTP + H2O = GDP + phosphate + H(+). Functionally, promotes mitochondrial protein synthesis. May act as a fidelity factor of the translation reaction, by catalyzing a one-codon backward translocation of tRNAs on improperly translocated ribosomes. Binds to mitochondrial ribosomes in a GTP-dependent manner. This chain is Translation factor GUF1 homolog, mitochondrial, found in Plasmodium knowlesi (strain H).